The primary structure comprises 88 residues: Large ribosomal subunit protein bL31B (88 aa).

This sequence belongs to the bacterial ribosomal protein bL31 family. Type B subfamily. As to quaternary structure, part of the 50S ribosomal subunit.

In Nocardia farcinica (strain IFM 10152), this protein is Large ribosomal subunit protein bL31B.